Here is a 122-residue protein sequence, read N- to C-terminus: Large ribosomal subunit protein uL14 (122 aa).

Belongs to the universal ribosomal protein uL14 family. Part of the 50S ribosomal subunit. Forms a cluster with proteins L3 and L19. In the 70S ribosome, L14 and L19 interact and together make contacts with the 16S rRNA in bridges B5 and B8.

In terms of biological role, binds to 23S rRNA. Forms part of two intersubunit bridges in the 70S ribosome. In Rhodospirillum rubrum (strain ATCC 11170 / ATH 1.1.1 / DSM 467 / LMG 4362 / NCIMB 8255 / S1), this protein is Large ribosomal subunit protein uL14.